The chain runs to 106 residues: MVQYRALVIAVILLLSTTVPEVHSKSIIDRERRDWLVIPDAAAAYIYEAVNKVSPRAGQFLLDVSQTTVVSGIRNFLINETARLTKLAEQLMEKIKNLCYTKVLGY.

The first 24 residues, 1 to 24 (MVQYRALVIAVILLLSTTVPEVHS), serve as a signal peptide directing secretion.

It belongs to the apovitellenin family. As to quaternary structure, homodimer; disulfide-linked. As to expression, produced by the liver, secreted into the blood and then sequestred by receptor mediated endocytosis into growing oocytes.

In terms of biological role, protein component of the very low density lipoprotein (VLDL) of egg-laying females. Potent lipoprotein lipase inhibitor, preventing the loss of triglycerides from VLDL on their way from the liver to the growing oocytes. This is Apovitellenin-1 from Gallus gallus (Chicken).